Reading from the N-terminus, the 127-residue chain is Mediator of RNA polymerase II transcription subunit 31 (127 aa).

The protein belongs to the Mediator complex subunit 31 family. Component of the Mediator complex.

The protein localises to the nucleus. Component of the Mediator complex, a coactivator involved in the regulated transcription of nearly all RNA polymerase II-dependent genes. Mediator functions as a bridge to convey information from gene-specific regulatory proteins to the basal RNA polymerase II transcription machinery. Mediator is recruited to promoters by direct interactions with regulatory proteins and serves as a scaffold for the assembly of a functional preinitiation complex with RNA polymerase II and the general transcription factors. In Eremothecium gossypii (strain ATCC 10895 / CBS 109.51 / FGSC 9923 / NRRL Y-1056) (Yeast), this protein is Mediator of RNA polymerase II transcription subunit 31 (SOH1).